The following is a 340-amino-acid chain: Uroporphyrinogen decarboxylase (340 aa).

Substrate is bound by residues 21 to 25 (RQAGR), Asp71, Tyr148, Ser203, and His316.

The protein belongs to the uroporphyrinogen decarboxylase family. Homodimer.

The protein resides in the cytoplasm. It carries out the reaction uroporphyrinogen III + 4 H(+) = coproporphyrinogen III + 4 CO2. It participates in porphyrin-containing compound metabolism; protoporphyrin-IX biosynthesis; coproporphyrinogen-III from 5-aminolevulinate: step 4/4. Functionally, catalyzes the decarboxylation of four acetate groups of uroporphyrinogen-III to yield coproporphyrinogen-III. The chain is Uroporphyrinogen decarboxylase from Campylobacter concisus (strain 13826).